We begin with the raw amino-acid sequence, 356 residues long: Histidinol-phosphate aminotransferase 2 (356 aa).

Lysine 217 carries the N6-(pyridoxal phosphate)lysine modification.

It belongs to the class-II pyridoxal-phosphate-dependent aminotransferase family. Histidinol-phosphate aminotransferase subfamily. In terms of assembly, homodimer. The cofactor is pyridoxal 5'-phosphate.

It catalyses the reaction L-histidinol phosphate + 2-oxoglutarate = 3-(imidazol-4-yl)-2-oxopropyl phosphate + L-glutamate. It functions in the pathway amino-acid biosynthesis; L-histidine biosynthesis; L-histidine from 5-phospho-alpha-D-ribose 1-diphosphate: step 7/9. The protein is Histidinol-phosphate aminotransferase 2 of Burkholderia pseudomallei (strain 1710b).